A 209-amino-acid chain; its full sequence is Redox-sensing transcriptional repressor Rex (209 aa).

Residues 16-55 (LYYRFIQNLSLSGKQRVSSAELSEAVKVDSATIRRDFSYF) constitute a DNA-binding region (H-T-H motif). Position 90-95 (90-95 (GVGNLG)) interacts with NAD(+).

The protein belongs to the transcriptional regulatory Rex family. As to quaternary structure, homodimer.

It localises to the cytoplasm. In terms of biological role, modulates transcription in response to changes in cellular NADH/NAD(+) redox state. The polypeptide is Redox-sensing transcriptional repressor Rex (Bacillus cereus (strain ATCC 10987 / NRS 248)).